We begin with the raw amino-acid sequence, 168 residues long: Small ribosomal subunit protein uS5 (168 aa).

The region spanning 14 to 77 (FEERVVSINR…EAAKKNLITV (64 aa)) is the S5 DRBM domain.

This sequence belongs to the universal ribosomal protein uS5 family. As to quaternary structure, part of the 30S ribosomal subunit. Contacts proteins S4 and S8.

With S4 and S12 plays an important role in translational accuracy. Its function is as follows. Located at the back of the 30S subunit body where it stabilizes the conformation of the head with respect to the body. This chain is Small ribosomal subunit protein uS5, found in Lactococcus lactis subsp. lactis (strain IL1403) (Streptococcus lactis).